Here is a 662-residue protein sequence, read N- to C-terminus: p-hydroxybenzoic acid efflux pump subunit AaeB (662 aa).

11 helical membrane passes run 22-42, 52-72, 78-98, 102-122, 129-149, 161-181, 378-398, 415-435, 439-459, 467-487, and 491-511; these read FAFKLTFAVVLSLFLGFHLQL, AAIVAGGPAFVAGGEPFSGAI, LRIVGTFIGCIGALAIIISTI, IVMMLLCCIWAGLCNWISSLV, IFGLAGYTTLIIILATQGTPM, EIVLGIACVIFADLLFAPRSI, LFWLSTGWSSGGICMMMIAVV, FLYGTIYSLPLGALMFMFILP, QSILLLCLSLGAMTFFLGVEV, LGALISTINVLLLNNPMTFNI, and LDNAIGQIIGCFVALMVILLI.

The protein belongs to the aromatic acid exporter ArAE (TC 2.A.85) family.

It localises to the cell inner membrane. Forms an efflux pump with AaeA. Could function as a metabolic relief valve, allowing to eliminate certain compounds when they accumulate to high levels in the cell. The sequence is that of p-hydroxybenzoic acid efflux pump subunit AaeB from Pectobacterium parmentieri (strain WPP163) (Pectobacterium wasabiae (strain WPP163)).